The primary structure comprises 354 residues: MIESITSFGTATFGGWWPLVWTLVRAVCIILPLLLCVAYLILWERKLIGWMHVRLGPNRVGPMGLLQPIADVLKLLLKEVMVPSAVSRGMYIIAPLMVLMPAVAIWAVIPFQAEAMVSNINAGLLYVMAISSVGVYGVILAGWASNSKYAFLGAMRASAQMISYEIAMGFALVTVLMVTGSLNLSDIVNSQNRGFFAGHGINILSWNWLPLLPMFGVYFISGVAETNRHPFDVVEGESEIVAGHMIEYSGMAFALFFLAEYINMIVISALTATLFLGGWASPIDAPVLNWIPGFFWLLIKVFLLLSVFIWLRASFPRYRYDQIMRLGWKIFIPLTVGWLVVVAIWLVSPWNIWK.

8 helical membrane passes run 23 to 43 (LVRAVCIILPLLLCVAYLILW), 91 to 111 (YIIAPLMVLMPAVAIWAVIPF), 124 to 144 (LLYVMAISSVGVYGVILAGWA), 162 to 182 (ISYEIAMGFALVTVLMVTGSL), 203 to 223 (ILSWNWLPLLPMFGVYFISGV), 250 to 270 (GMAFALFFLAEYINMIVISAL), 291 to 311 (IPGFFWLLIKVFLLLSVFIWL), and 330 to 350 (IFIPLTVGWLVVVAIWLVSPW).

Belongs to the complex I subunit 1 family. In terms of assembly, NDH-1 is composed of 14 different subunits. Subunits NuoA, H, J, K, L, M, N constitute the membrane sector of the complex.

It is found in the cell inner membrane. The catalysed reaction is a quinone + NADH + 5 H(+)(in) = a quinol + NAD(+) + 4 H(+)(out). NDH-1 shuttles electrons from NADH, via FMN and iron-sulfur (Fe-S) centers, to quinones in the respiratory chain. The immediate electron acceptor for the enzyme in this species is believed to be ubiquinone. Couples the redox reaction to proton translocation (for every two electrons transferred, four hydrogen ions are translocated across the cytoplasmic membrane), and thus conserves the redox energy in a proton gradient. This subunit may bind ubiquinone. The sequence is that of NADH-quinone oxidoreductase subunit H from Ralstonia pickettii (strain 12J).